The chain runs to 479 residues: Glutamyl-tRNA(Gln) amidotransferase subunit A (479 aa).

Residues lysine 75 and serine 150 each act as charge relay system in the active site. The Acyl-ester intermediate role is filled by serine 174.

The protein belongs to the amidase family. GatA subfamily. As to quaternary structure, heterotrimer of A, B and C subunits.

The enzyme catalyses L-glutamyl-tRNA(Gln) + L-glutamine + ATP + H2O = L-glutaminyl-tRNA(Gln) + L-glutamate + ADP + phosphate + H(+). Its function is as follows. Allows the formation of correctly charged Gln-tRNA(Gln) through the transamidation of misacylated Glu-tRNA(Gln) in organisms which lack glutaminyl-tRNA synthetase. The reaction takes place in the presence of glutamine and ATP through an activated gamma-phospho-Glu-tRNA(Gln). The polypeptide is Glutamyl-tRNA(Gln) amidotransferase subunit A (Synechococcus sp. (strain ATCC 27144 / PCC 6301 / SAUG 1402/1) (Anacystis nidulans)).